Reading from the N-terminus, the 129-residue chain is Protein Turandot C (129 aa).

Positions 1-21 are cleaved as a signal peptide; it reads MNASISLLCFALLLISPFCLG.

This sequence belongs to the Turandot family.

It localises to the secreted. In terms of biological role, a humoral factor that may play a role in stress tolerance. This chain is Protein Turandot C, found in Drosophila sechellia (Fruit fly).